The following is a 674-amino-acid chain: DNA ligase (674 aa).

NAD(+) is bound by residues 34–38, 84–85, and E116; these read DAEYD and SL. K118 (N6-AMP-lysine intermediate) is an active-site residue. Residues R139, E174, K291, and K315 each coordinate NAD(+). Zn(2+) contacts are provided by C409, C412, C425, and C430. One can recognise a BRCT domain in the interval 586–674; the sequence is REGEALKGLT…TGKDPRALTA (89 aa).

It belongs to the NAD-dependent DNA ligase family. LigA subfamily. Mg(2+) is required as a cofactor. Requires Mn(2+) as cofactor.

It carries out the reaction NAD(+) + (deoxyribonucleotide)n-3'-hydroxyl + 5'-phospho-(deoxyribonucleotide)m = (deoxyribonucleotide)n+m + AMP + beta-nicotinamide D-nucleotide.. DNA ligase that catalyzes the formation of phosphodiester linkages between 5'-phosphoryl and 3'-hydroxyl groups in double-stranded DNA using NAD as a coenzyme and as the energy source for the reaction. It is essential for DNA replication and repair of damaged DNA. This Thermus sp. (strain AK16D) protein is DNA ligase.